Consider the following 372-residue polypeptide: Queuine tRNA-ribosyltransferase (372 aa).

The active-site Proton acceptor is the Asp-92. Substrate is bound by residues 92-96, Asp-146, Gln-188, and Gly-215; that span reads DSGGY. The tract at residues 246 to 252 is RNA binding; that stretch reads GIGSLKE. Residue Asp-265 is the Nucleophile of the active site. The tract at residues 270-274 is RNA binding; important for wobble base 34 recognition; that stretch reads TRLGR. 4 residues coordinate Zn(2+): Cys-303, Cys-305, Cys-308, and His-334.

Belongs to the queuine tRNA-ribosyltransferase family. In terms of assembly, homodimer. Within each dimer, one monomer is responsible for RNA recognition and catalysis, while the other monomer binds to the replacement base PreQ1. Zn(2+) serves as cofactor.

It carries out the reaction 7-aminomethyl-7-carbaguanine + guanosine(34) in tRNA = 7-aminomethyl-7-carbaguanosine(34) in tRNA + guanine. It participates in tRNA modification; tRNA-queuosine biosynthesis. Catalyzes the base-exchange of a guanine (G) residue with the queuine precursor 7-aminomethyl-7-deazaguanine (PreQ1) at position 34 (anticodon wobble position) in tRNAs with GU(N) anticodons (tRNA-Asp, -Asn, -His and -Tyr). Catalysis occurs through a double-displacement mechanism. The nucleophile active site attacks the C1' of nucleotide 34 to detach the guanine base from the RNA, forming a covalent enzyme-RNA intermediate. The proton acceptor active site deprotonates the incoming PreQ1, allowing a nucleophilic attack on the C1' of the ribose to form the product. After dissociation, two additional enzymatic reactions on the tRNA convert PreQ1 to queuine (Q), resulting in the hypermodified nucleoside queuosine (7-(((4,5-cis-dihydroxy-2-cyclopenten-1-yl)amino)methyl)-7-deazaguanosine). The sequence is that of Queuine tRNA-ribosyltransferase from Prochlorococcus marinus (strain MIT 9515).